A 367-amino-acid polypeptide reads, in one-letter code: Peptide chain release factor 2 (367 aa).

Q247 carries the post-translational modification N5-methylglutamine.

The protein belongs to the prokaryotic/mitochondrial release factor family. In terms of processing, methylated by PrmC. Methylation increases the termination efficiency of RF2.

The protein resides in the cytoplasm. In terms of biological role, peptide chain release factor 2 directs the termination of translation in response to the peptide chain termination codons UGA and UAA. The sequence is that of Peptide chain release factor 2 from Caulobacter sp. (strain K31).